Consider the following 1881-residue polypeptide: Ankyrin-1 (1881 aa).

The segment at 1–827 (MPYSVGFREA…EDEGEELISF (827 aa)) is 89 kDa domain. ANK repeat units lie at residues 44 to 73 (NGLN…ILET), 77 to 106 (KGNT…NVNA), 110 to 139 (KGFT…NQNV), 143 to 172 (DGFT…KGKV), 174 to 201 (LPAL…NPDV), 205 to 234 (TGFT…SVNF), 238 to 267 (NGIT…QIET), 271 to 300 (DELT…PIQA), 304 to 333 (NGLS…EIDD), 337 to 366 (DHLT…KPNS), 370 to 399 (NGFT…SIDA), 403 to 432 (SGLT…SPNV), 436 to 465 (KVET…KVNA), 469 to 498 (DDQT…NPNL), 502 to 531 (AGHT…SQAC), 535 to 564 (KGFT…HPNA), 568 to 597 (NGLT…SPHS), 601 to 630 (NGYT…SANA), 634 to 663 (QGVT…NGNL), 667 to 696 (SGLT…MVDA), 700 to 729 (MGYT…DVNA), 733 to 762 (LGYS…SPNE), and 766 to 795 (DGTT…ETSF). At Asn105 the chain carries (3S)-3-hydroxyasparagine; by HIF1AN; partial. Asn233 carries the (3S)-3-hydroxyasparagine; by HIF1AN; partial modification. Ser429 bears the Phosphoserine mark. Asn431 and Asn464 each carry (3S)-3-hydroxyasparagine; by HIF1AN; partial. (3S)-3-hydroxyasparagine; by HIF1AN; partial occurs at positions 629 and 662. Asp695 is modified ((3S)-3-hydroxyaspartate; by HIF1AN; partial). A (3S)-3-hydroxyasparagine; by HIF1AN; partial modification is found at Asn728. Ser759 bears the Phosphoserine mark. Asn761 carries the post-translational modification (3S)-3-hydroxyasparagine; by HIF1AN; partial. A phosphoserine mark is found at Ser781, Ser817, Ser834, and Ser856. The disordered stretch occupies residues 875–904 (EEQEQASKEYDEDSLIPSSPATETSDNISP). Residues 890–904 (IPSSPATETSDNISP) show a composition bias toward polar residues. ZU5 domains follow at residues 913–1068 (FLVS…IMSR) and 1070–1216 (CQDY…LSDC). Thr961 bears the Phosphothreonine mark. Position 1073 is a phosphotyrosine (Tyr1073). Residue Ser1082 is modified to Phosphoserine. Residues 1234 to 1362 (TAVPYMAKFV…QHILCHLNIT (129 aa)) form a UPA domain region. 2 positions are modified to phosphothreonine: Thr1378 and Thr1380. The interval 1383-1881 (ALRYSILSES…SKDHTSTPNP (499 aa)) is 55 kDa regulatory domain. Phosphoserine is present on residues Ser1390, Ser1392, and Ser1396. Residue Thr1400 is modified to Phosphothreonine. Positions 1403–1487 (AEMKMAVISE…EIVNMLEGSG (85 aa)) constitute a Death domain. A phosphoserine mark is found at Ser1428 and Ser1486. The disordered stretch occupies residues 1486–1510 (SGRQSRNLKPDRRHTDRDYSLSPSQ). Positions 1493 to 1504 (LKPDRRHTDRDY) are enriched in basic and acidic residues. Phosphoserine is present on residues Ser1523 and Ser1533. A disordered region spans residues 1583 to 1613 (SSLECSKAEDSDATGHEWKLEGALSEEPRGP). The segment covering 1588 to 1612 (SKAEDSDATGHEWKLEGALSEEPRG) has biased composition (basic and acidic residues). The residue at position 1617 (Ser1617) is a Phosphoserine. Disordered regions lie at residues 1637–1703 (LLEQ…LQDW), 1718–1791 (QGSW…EAKN), and 1840–1859 (ADAA…EDPS). A compositionally biased stretch (basic and acidic residues) spans 1642-1658 (EGQRSEEKLPGSKRQDD). 5 positions are modified to phosphoserine: Ser1666, Ser1671, Ser1686, Ser1690, and Ser1696. Over residues 1683-1694 (ITHSPTVSQVTE) the composition is skewed to polar residues. 2 stretches are compositionally biased toward polar residues: residues 1718–1739 (QGSW…STMT) and 1758–1771 (SEHT…AESS). Basic and acidic residues predominate over residues 1772–1781 (QADRDRRQQG).

Component of the ankyrin-1 complex in the erythrocyte, composed of ANK1, RHCE, RHAG, SLC4A1, EPB42, GYPA, GYPB and AQP1. Interacts with a number of integral membrane proteins and cytoskeletal proteins. Interacts (via N-terminus) with SPTB/spectrin (beta chain). Also interacts with TTN/titin. Isoform Mu17 interacts with OBSCN isoform 3/obscurin. Interacts with HIF1AN. Interacts (via ANK 1-5 repeats) with RHCE; this interaction mediates the primary membrane attachment site for ANK1. Interacts (via ANK 1-2 repeats) with AQP1 (via the N-terminal). Interacts (via ANK 1-13 repeats) with EPB42. Interacts directly with SLC4A1 (via the cytoplasmic domain); this interaction is mediated by the SLC4A1 Band 3-II and Band 3-III dimers. Post-translationally, regulated by phosphorylation. In terms of processing, palmitoylated. Hydroxylated by HIF1AN at several asparagine and 1 aspartate residue within ANK repeat region. Hydroxylation seems to increase the conformational stability of this region and may also modulate protein-protein interactions mediated by the ANK repeat region. Post-translationally, (Microbial infection) Probably cleaved by P.falciparum SERA6; the cleavage probably causes the disruption of the actin cytoskeleton and the rupture of the erythrocyte cell membrane releasing the merozoites. Isoform Mu17, isoform Mu18, isoform Mu19 and isoform Mu20 are expressed in skeletal muscle. Isoform Br21 is expressed in brain.

It is found in the cytoplasm. It localises to the cytoskeleton. The protein resides in the membrane. The protein localises to the myofibril. Its subcellular location is the sarcomere. It is found in the m line. It localises to the sarcoplasmic reticulum. Component of the ankyrin-1 complex, a multiprotein complex involved in the stability and shape of the erythrocyte membrane. Attaches integral membrane proteins to cytoskeletal elements; binds to the erythrocyte membrane protein band 4.2, to Na-K ATPase, to the lymphocyte membrane protein GP85, and to the cytoskeletal proteins fodrin, tubulin, vimentin and desmin. Erythrocyte ankyrins also link spectrin (beta chain) to the cytoplasmic domain of the erythrocytes anion exchange protein; they retain most or all of these binding functions. In terms of biological role, together with obscurin in skeletal muscle may provide a molecular link between the sarcoplasmic reticulum and myofibrils. This is Ankyrin-1 from Homo sapiens (Human).